A 637-amino-acid polypeptide reads, in one-letter code: Coiled-coil domain-containing protein 22 homolog (637 aa).

2 coiled-coil regions span residues 322-489 (ETEI…YKQA) and 608-637 (SDRVVQDLKNIKSENQSLIKQIKTLIETKN).

The protein belongs to the CCDC22 family.

This chain is Coiled-coil domain-containing protein 22 homolog, found in Dictyostelium discoideum (Social amoeba).